The chain runs to 1171 residues: ATP-dependent helicase/deoxyribonuclease subunit B (1171 aa).

The UvrD-like helicase ATP-binding domain occupies 1–390 (MSLRFVIGRA…HPLVECIRSA (390 aa)). Residue 8 to 15 (GRAGSGKS) coordinates ATP. Positions 281–587 (MEQPRFHSPA…QFANIPPSLD (307 aa)) constitute a UvrD-like helicase C-terminal domain. [4Fe-4S] cluster is bound by residues cysteine 805, cysteine 1129, cysteine 1132, and cysteine 1138.

This sequence belongs to the helicase family. AddB/RexB type 1 subfamily. As to quaternary structure, heterodimer of AddA and AddB. It depends on Mg(2+) as a cofactor. Requires [4Fe-4S] cluster as cofactor.

Functionally, the heterodimer acts as both an ATP-dependent DNA helicase and an ATP-dependent, dual-direction single-stranded exonuclease. Recognizes the chi site generating a DNA molecule suitable for the initiation of homologous recombination. The AddB subunit has 5' -&gt; 3' nuclease activity but not helicase activity. The polypeptide is ATP-dependent helicase/deoxyribonuclease subunit B (Bacillus cereus (strain ATCC 10987 / NRS 248)).